The primary structure comprises 838 residues: Probable beta-glucosidase I (838 aa).

N-linked (GlcNAc...) asparagine glycosylation occurs at Asn197. Asp225 is a catalytic residue. One can recognise a PA14 domain in the interval 395-555 (DGKKGFKFRV…SQEELISKAA (161 aa)). Asn493 carries an N-linked (GlcNAc...) asparagine glycan.

This sequence belongs to the glycosyl hydrolase 3 family.

Its subcellular location is the secreted. The catalysed reaction is Hydrolysis of terminal, non-reducing beta-D-glucosyl residues with release of beta-D-glucose.. Its pathway is glycan metabolism; cellulose degradation. Its function is as follows. Beta-glucosidases are one of a number of cellulolytic enzymes involved in the degradation of cellulosic biomass. Catalyzes the last step releasing glucose from the inhibitory cellobiose. The protein is Probable beta-glucosidase I (bglI) of Aspergillus fumigatus (strain ATCC MYA-4609 / CBS 101355 / FGSC A1100 / Af293) (Neosartorya fumigata).